The primary structure comprises 1071 residues: SLIT-ROBO Rho GTPase-activating protein 2 (1071 aa).

Residues 22–325 (KEIRAQLTEQ…AVENLDATSD (304 aa)) enclose the F-BAR domain. The span at 181–203 (LKEAEKQEEKQIGKSVKQEDRQT) shows a compositional bias: basic and acidic residues. Residues 181 to 211 (LKEAEKQEEKQIGKSVKQEDRQTPRSPDSTA) form a disordered region. Ser-206 is modified (phosphoserine). Residues 363 to 401 (QSELVQRRQQLQSRLSTLKIENEEVKKTMEATLQTIQDI) are a coiled coil. Residues Ser-427, Ser-500, Ser-691, Ser-695, and Ser-724 each carry the phosphoserine modification. In terms of domain architecture, Rho-GAP spans 489–679 (ARRSSTVRKQ…TIIIQHENIF (191 aa)). The tract at residues 703–726 (THGETISAEDSTQDVTAEHHTSDD) is disordered. Residues 728-787 (CEPIEAIAKFDYVGRTARELSFKKGASLLLYQRASDDWWEGRHNGIDGLIPHQYIVVQDT) form the SH3 domain. 2 disordered regions span residues 794–820 (RSSPKSEIEVMSEPPEEKVTARTGASC) and 835–936 (NKQR…NHRP). Position 795 is a phosphoserine (Ser-795). Composition is skewed to polar residues over residues 857 to 867 (LGSSLTDSSSP), 874 to 885 (RPSSQPIMSQNL), and 897 to 907 (GHGSLNSISRH). Ser-916 is subject to Phosphoserine. Residues 919–933 (IRKTATAGRSKSFNN) are compositionally biased toward polar residues. Arg-927 is modified (symmetric dimethylarginine; by PRMT5). Ser-930 carries the post-translational modification Phosphoserine. Residues 940–968 (EVIAQDIEATMNSALNELQELERQSSAKH) adopt a coiled-coil conformation. A disordered region spans residues 983–1012 (SPVVAPTSEPSSPLHTQLLKDPEPAFQRSA). A phosphoserine mark is found at Ser-990, Ser-994, Ser-1013, and Ser-1027. The interval 1029–1071 (KMAAPVKPPATRPKPTVFPKTNATSPGVNSSASPQSTDKSCTV) is disordered. The span at 1047-1071 (PKTNATSPGVNSSASPQSTDKSCTV) shows a compositional bias: polar residues.

In terms of assembly, homodimer. Forms a heterooligomer with SRGAP1 and SRGAP3 through its F-BAR domain. Interacts (via SH3 domain) with GPHN. Interacts (via SH3 domain) with FMNL1 (activated by RAC1); regulates the actin filament severing activity of FMNL1 and actin dynamics. Interacts (via SH3 domain) with FMNL3. Interacts with RAC1; specifically stimulates RAC1 GTPase activity. Interacts (via F-BAR domain) with HOMER1. Interacts with ROBO1 and ROBO2. Interacts with FASLG. Interacts with PRMT5. In terms of processing, methylation at Arg-927 is required for the stimulation of cell migration, dimerization and localization at the plasma membrane protrusions.

The protein localises to the cell membrane. It is found in the cell projection. The protein resides in the dendritic spine. Its subcellular location is the postsynaptic density. It localises to the postsynaptic cell membrane. The protein localises to the lamellipodium. It is found in the cytoplasmic vesicle. The protein resides in the phagosome. Its subcellular location is the nucleus. It localises to the cytoplasm. The protein localises to the cytosol. Postsynaptic RAC1 GTPase activating protein (GAP) that plays a key role in neuronal morphogenesis and migration mainly during development of the cerebral cortex. Regulates excitatory and inhibitory synapse maturation and density in cortical pyramidal neurons. SRGAP2/SRGAP2A limits excitatory and inhibitory synapse density through its RAC1-specific GTPase activating activity, while it promotes maturation of both excitatory and inhibitory synapses through its ability to bind to the postsynaptic scaffolding protein HOMER1 at excitatory synapses, and the postsynaptic protein GPHN at inhibitory synapses. Mechanistically, acts by binding and deforming membranes, thereby regulating actin dynamics to regulate cell migration and differentiation. Promotes cell repulsion and contact inhibition of locomotion: localizes to protrusions with curved edges and controls the duration of RAC1 activity in contact protrusions. In non-neuronal cells, may also play a role in cell migration by regulating the formation of lamellipodia and filopodia. The chain is SLIT-ROBO Rho GTPase-activating protein 2 from Rattus norvegicus (Rat).